The primary structure comprises 217 residues: 3,4-dihydroxy-2-butanone 4-phosphate synthase (217 aa).

Residues 37-38 (RE), Asp-42, 150-154 (RRGHT), and Glu-174 contribute to the D-ribulose 5-phosphate site. Glu-38 serves as a coordination point for Mg(2+). His-153 is a Mg(2+) binding site.

The protein belongs to the DHBP synthase family. In terms of assembly, homodimer. It depends on Mg(2+) as a cofactor. The cofactor is Mn(2+).

The enzyme catalyses D-ribulose 5-phosphate = (2S)-2-hydroxy-3-oxobutyl phosphate + formate + H(+). Its pathway is cofactor biosynthesis; riboflavin biosynthesis; 2-hydroxy-3-oxobutyl phosphate from D-ribulose 5-phosphate: step 1/1. In terms of biological role, catalyzes the conversion of D-ribulose 5-phosphate to formate and 3,4-dihydroxy-2-butanone 4-phosphate. This is 3,4-dihydroxy-2-butanone 4-phosphate synthase from Shewanella sp. (strain MR-4).